The primary structure comprises 105 residues: Protein LITTLE ZIPPER 2 (105 aa).

Residues 1-20 (MCLTTSEPPFPDTDTPTMRS) are disordered. The stretch at 39–60 (NLTRRRRLLKEQKEMEMRNLKL) forms a coiled coil.

Interacts with REV.

Its function is as follows. Competitive inhibitor of the HD-ZIPIII transcription factors in shoot apical meristem (SAM) development. Acts by forming non-functional heterodimers. Part of a negative feedback loop. Essential for proper functioning of stem cells in the SAM. In Arabidopsis thaliana (Mouse-ear cress), this protein is Protein LITTLE ZIPPER 2.